Here is a 238-residue protein sequence, read N- to C-terminus: Female-specific protein 800 (238 aa).

Residues 35 to 50 (YSYHHTYNNNNQGNYQ) are compositionally biased toward low complexity. Disordered regions lie at residues 35 to 112 (YSYH…KGGS) and 166 to 204 (NKRKITKSEKNGRYIKKDHMNNRDSNTNINEKPEYSKSP). Positions 97 to 106 (RNDQIQSRGN) are enriched in polar residues. Positions 171-187 (TKSEKNGRYIKKDHMNN) are enriched in basic and acidic residues.

Its function is as follows. FS800 is likely to have some function in the production or maintenance of the schistosome egg. This is Female-specific protein 800 from Schistosoma mansoni (Blood fluke).